A 338-amino-acid polypeptide reads, in one-letter code: POU domain, class 4, transcription factor 3 (338 aa).

A POU-IV box motif is present at residues 56–65; it reads RAEALAAVDI. Residues 179–256 enclose the POU-specific domain; it reads DVESDPRELE…VLQAWLEEAE (78 aa). A DNA-binding region (homeobox) is located at residues 274–333; the sequence is RKRKRTSIAAPEKRSLEAYFAIQPRPSSEKIAAIAEKLDLKKNVVRVWFCNQRQKQKRMK.

Belongs to the POU transcription factor family. Class-4 subfamily. Interacts with ISL1. Brain. Seems to be specific to the retina.

Its subcellular location is the nucleus. The protein resides in the cytoplasm. In terms of biological role, acts as a transcriptional activator. Acts by binding to sequences related to the consensus octamer motif 5'-ATGCAAAT-3' in the regulatory regions of its target genes. Involved in the auditory system development, required for terminal differentiation of hair cells in the inner ear. The chain is POU domain, class 4, transcription factor 3 (POU4F3) from Homo sapiens (Human).